The primary structure comprises 173 residues: Crossover junction endodeoxyribonuclease RuvC (173 aa).

Residues Asp-8, Glu-67, and Asp-139 contribute to the active site. Residues Asp-8, Glu-67, and Asp-139 each coordinate Mg(2+).

This sequence belongs to the RuvC family. In terms of assembly, homodimer which binds Holliday junction (HJ) DNA. The HJ becomes 2-fold symmetrical on binding to RuvC with unstacked arms; it has a different conformation from HJ DNA in complex with RuvA. In the full resolvosome a probable DNA-RuvA(4)-RuvB(12)-RuvC(2) complex forms which resolves the HJ. The cofactor is Mg(2+).

It is found in the cytoplasm. The enzyme catalyses Endonucleolytic cleavage at a junction such as a reciprocal single-stranded crossover between two homologous DNA duplexes (Holliday junction).. Its function is as follows. The RuvA-RuvB-RuvC complex processes Holliday junction (HJ) DNA during genetic recombination and DNA repair. Endonuclease that resolves HJ intermediates. Cleaves cruciform DNA by making single-stranded nicks across the HJ at symmetrical positions within the homologous arms, yielding a 5'-phosphate and a 3'-hydroxyl group; requires a central core of homology in the junction. The consensus cleavage sequence is 5'-(A/T)TT(C/G)-3'. Cleavage occurs on the 3'-side of the TT dinucleotide at the point of strand exchange. HJ branch migration catalyzed by RuvA-RuvB allows RuvC to scan DNA until it finds its consensus sequence, where it cleaves and resolves the cruciform DNA. This Proteus mirabilis (strain HI4320) protein is Crossover junction endodeoxyribonuclease RuvC.